We begin with the raw amino-acid sequence, 598 residues long: (-)-endo-fenchol synthase, chloroplastic (598 aa).

Residues 1-34 (MWSTISISMNVAILKKPLNFLHNSNNKASNPRCV) constitute a chloroplast transit peptide. 5 residues coordinate Mg(2+): Asp-351, Asp-355, Asp-495, Thr-499, and Glu-503. The DDXXD motif signature appears at 351–355 (DDVYD).

Belongs to the terpene synthase family. Mg(2+) is required as a cofactor. Mn(2+) serves as cofactor.

It is found in the plastid. The protein resides in the chloroplast. It carries out the reaction (2E)-geranyl diphosphate + H2O = (1S,2S,4R)-endo-fenchol + diphosphate. It participates in secondary metabolite biosynthesis; terpenoid biosynthesis. Functionally, monoterpene synthase that catalyzes the formation of fenchol from geranyl diphosphate. The chain is (-)-endo-fenchol synthase, chloroplastic (FES) from Ocimum basilicum (Sweet basil).